A 183-amino-acid chain; its full sequence is MLTMDDIVREGHPALREVATEVTFPLSDEEKKLGRDMLEFLINSQDEEMAEKYGLRGGVGIAAPQLAVTKRFLAIHVHDEKDRLYSYVLYNPKIRSHSVQQACLSGGEGCLSVDREVPGYVVRSERVTIDAFDENGTPLKLRFKDYPAIVIQHEIDHLNGIMFYDHINKENPSYLPPDVDVFG.

Cys-110 and His-153 together coordinate Fe cation. Glu-154 is a catalytic residue. His-157 lines the Fe cation pocket.

This sequence belongs to the polypeptide deformylase family. The cofactor is Fe(2+).

The enzyme catalyses N-terminal N-formyl-L-methionyl-[peptide] + H2O = N-terminal L-methionyl-[peptide] + formate. In terms of biological role, removes the formyl group from the N-terminal Met of newly synthesized proteins. Requires at least a dipeptide for an efficient rate of reaction. N-terminal L-methionine is a prerequisite for activity but the enzyme has broad specificity at other positions. This Listeria monocytogenes serotype 4a (strain HCC23) protein is Peptide deformylase.